The following is a 249-amino-acid chain: Enolase-phosphatase E1 (249 aa).

Belongs to the HAD-like hydrolase superfamily. MasA/MtnC family. As to quaternary structure, monomer. Mg(2+) serves as cofactor.

It carries out the reaction 5-methylsulfanyl-2,3-dioxopentyl phosphate + H2O = 1,2-dihydroxy-5-(methylsulfanyl)pent-1-en-3-one + phosphate. It participates in amino-acid biosynthesis; L-methionine biosynthesis via salvage pathway; L-methionine from S-methyl-5-thio-alpha-D-ribose 1-phosphate: step 3/6. The protein operates within amino-acid biosynthesis; L-methionine biosynthesis via salvage pathway; L-methionine from S-methyl-5-thio-alpha-D-ribose 1-phosphate: step 4/6. Functionally, bifunctional enzyme that catalyzes the enolization of 2,3-diketo-5-methylthiopentyl-1-phosphate (DK-MTP-1-P) into the intermediate 2-hydroxy-3-keto-5-methylthiopentenyl-1-phosphate (HK-MTPenyl-1-P), which is then dephosphorylated to form the acireductone 1,2-dihydroxy-3-keto-5-methylthiopentene (DHK-MTPene). In Pseudomonas aeruginosa (strain ATCC 15692 / DSM 22644 / CIP 104116 / JCM 14847 / LMG 12228 / 1C / PRS 101 / PAO1), this protein is Enolase-phosphatase E1.